The sequence spans 874 residues: Probable inorganic carbon transporter subunit DabA (874 aa).

Cys-398, Asp-400, His-580, and Cys-595 together coordinate Zn(2+).

This sequence belongs to the inorganic carbon transporter (TC 9.A.2) DabA family. As to quaternary structure, forms a complex with DabB. Requires Zn(2+) as cofactor.

The protein resides in the cell membrane. In terms of biological role, part of an energy-coupled inorganic carbon pump. This chain is Probable inorganic carbon transporter subunit DabA, found in Bacillus thuringiensis subsp. konkukian (strain 97-27).